The following is a 180-amino-acid chain: Adenine phosphoribosyltransferase (180 aa).

The residue at position 2 (Ser-2) is an N-acetylserine. Phosphoserine occurs at positions 15 and 30. Tyr-60 is modified (phosphotyrosine). Ser-66 carries the phosphoserine modification. The residue at position 114 (Lys-114) is an N6-acetyllysine. A Phosphothreonine modification is found at Thr-135.

The protein belongs to the purine/pyrimidine phosphoribosyltransferase family. In terms of assembly, homodimer.

It localises to the cytoplasm. The enzyme catalyses AMP + diphosphate = 5-phospho-alpha-D-ribose 1-diphosphate + adenine. It participates in purine metabolism; AMP biosynthesis via salvage pathway; AMP from adenine: step 1/1. Functionally, catalyzes a salvage reaction resulting in the formation of AMP, that is energically less costly than de novo synthesis. The protein is Adenine phosphoribosyltransferase of Mus musculus (Mouse).